The primary structure comprises 390 residues: Cystathionine beta-lyase (390 aa).

N6-(pyridoxal phosphate)lysine is present on Lys-202.

This sequence belongs to the trans-sulfuration enzymes family. Requires pyridoxal 5'-phosphate as cofactor.

The protein localises to the cytoplasm. It localises to the nucleus. The catalysed reaction is L,L-cystathionine + H2O = L-homocysteine + pyruvate + NH4(+). It carries out the reaction an S-substituted L-cysteine + H2O = a thiol + pyruvate + NH4(+). It functions in the pathway amino-acid biosynthesis; L-methionine biosynthesis via de novo pathway; L-homocysteine from L-cystathionine: step 1/1. This chain is Cystathionine beta-lyase (str3), found in Schizosaccharomyces pombe (strain 972 / ATCC 24843) (Fission yeast).